The chain runs to 440 residues: Xylose isomerase (440 aa).

Residues His101 and Asp104 contribute to the active site. 7 residues coordinate Mg(2+): Glu232, Glu268, His271, Asp296, Asp307, Asp309, and Asp339.

This sequence belongs to the xylose isomerase family. Homotetramer. Mg(2+) serves as cofactor.

It localises to the cytoplasm. It carries out the reaction alpha-D-xylose = alpha-D-xylulofuranose. This Escherichia coli O17:K52:H18 (strain UMN026 / ExPEC) protein is Xylose isomerase.